Here is a 78-residue protein sequence, read N- to C-terminus: Defensin-like protein 171 (78 aa).

The first 23 residues, 1–23 (MAKTASSLVLPIIFLVMFALVEQ), serve as a signal peptide directing secretion. Disulfide bonds link Cys-27–Cys-71, Cys-34–Cys-56, Cys-40–Cys-65, and Cys-44–Cys-67.

This sequence belongs to the DEFL family.

The protein localises to the secreted. In Arabidopsis thaliana (Mouse-ear cress), this protein is Defensin-like protein 171 (LCR61).